Reading from the N-terminus, the 209-residue chain is Orotate phosphoribosyltransferase (209 aa).

5-phospho-alpha-D-ribose 1-diphosphate contacts are provided by residues Arg96, Lys100, His102, and 122 to 130 (EDLISTGGS). Ser126 contacts orotate.

It belongs to the purine/pyrimidine phosphoribosyltransferase family. PyrE subfamily. In terms of assembly, homodimer. The cofactor is Mg(2+).

It catalyses the reaction orotidine 5'-phosphate + diphosphate = orotate + 5-phospho-alpha-D-ribose 1-diphosphate. It participates in pyrimidine metabolism; UMP biosynthesis via de novo pathway; UMP from orotate: step 1/2. Catalyzes the transfer of a ribosyl phosphate group from 5-phosphoribose 1-diphosphate to orotate, leading to the formation of orotidine monophosphate (OMP). In Streptococcus agalactiae serotype Ia (strain ATCC 27591 / A909 / CDC SS700), this protein is Orotate phosphoribosyltransferase.